A 194-amino-acid chain; its full sequence is Histone H1.0 (194 aa).

Met-1 bears the N-acetylmethionine mark. Positions Met-1–Ala-11 are enriched in low complexity. The disordered stretch occupies residues Met-1 to Ser-29. An N-acetylthreonine; in Histone H1.0, N-terminally processed modification is found at Thr-2. An H15 domain is found at Asp-24 to Lys-97. Arg-42 is subject to Citrulline. Positions Thr-84–Lys-194 are disordered. At Ser-104 the chain carries ADP-ribosylserine. A compositionally biased stretch (basic residues) spans Val-105 to Lys-194.

This sequence belongs to the histone H1/H5 family. Post-translationally, ADP-ribosylated on Ser-104 in response to DNA damage.

The protein localises to the nucleus. It is found in the chromosome. Functionally, histones H1 are necessary for the condensation of nucleosome chains into higher-order structures. The histones H1.0 are found in cells that are in terminal stages of differentiation or that have low rates of cell division. This is Histone H1.0 (H1-0) from Pongo abelii (Sumatran orangutan).